The following is a 257-amino-acid chain: Tryptophan synthase alpha chain (257 aa).

Catalysis depends on proton acceptor residues Glu-44 and Asp-55.

The protein belongs to the TrpA family. Tetramer of two alpha and two beta chains.

The catalysed reaction is (1S,2R)-1-C-(indol-3-yl)glycerol 3-phosphate + L-serine = D-glyceraldehyde 3-phosphate + L-tryptophan + H2O. It participates in amino-acid biosynthesis; L-tryptophan biosynthesis; L-tryptophan from chorismate: step 5/5. In terms of biological role, the alpha subunit is responsible for the aldol cleavage of indoleglycerol phosphate to indole and glyceraldehyde 3-phosphate. The polypeptide is Tryptophan synthase alpha chain (Chlamydia caviae (strain ATCC VR-813 / DSM 19441 / 03DC25 / GPIC) (Chlamydophila caviae)).